Here is a 297-residue protein sequence, read N- to C-terminus: Farnesyl diphosphate synthase (297 aa).

K47, R50, and H79 together coordinate isopentenyl diphosphate. Mg(2+)-binding residues include D86 and D92. R97 serves as a coordination point for (2E)-geranyl diphosphate. Position 98 (R98) interacts with isopentenyl diphosphate. Residues K183, T184, Q221, and K238 each coordinate (2E)-geranyl diphosphate.

Belongs to the FPP/GGPP synthase family. The cofactor is Mg(2+).

The protein localises to the cytoplasm. It carries out the reaction isopentenyl diphosphate + (2E)-geranyl diphosphate = (2E,6E)-farnesyl diphosphate + diphosphate. The polypeptide is Farnesyl diphosphate synthase (Geobacillus stearothermophilus (Bacillus stearothermophilus)).